We begin with the raw amino-acid sequence, 679 residues long: Protein asunder (679 aa).

Residues 519–541 (RLKVNKTKDQYRLFYRELEQLIQ) are a coiled coil. The interval 564-610 (GDASNKSDPSAAHLRSYTESPLSPERLEPTNSVNSSSSSILKASKRR) is disordered. The Nuclear localization signal (NLS) motif lies at 604-610 (LKASKRR).

Belongs to the Integrator subunit 13 family. In terms of assembly, belongs to the multiprotein complex Integrator, at least composed of IntS1, IntS2, IntS3, IntS4, omd/IntS5, IntS6, defl/IntS7, IntS8, IntS9, IntS10, IntS11, IntS12, asun/IntS13, IntS14 and IntS15. The core complex associates with protein phosphatase 2A subunits mts/PP2A and Pp2A-29B, to form the Integrator-PP2A (INTAC) complex. In terms of processing, phosphorylated.

It is found in the nucleus. It localises to the cytoplasm. The protein resides in the perinuclear region. Functionally, component of the integrator complex, a multiprotein complex that terminates RNA polymerase II (Pol II) transcription in the promoter-proximal region of genes. The integrator complex provides a quality checkpoint during transcription elongation by driving premature transcription termination of transcripts that are unfavorably configured for transcriptional elongation: the complex terminates transcription by (1) catalyzing dephosphorylation of the C-terminal domain (CTD) of Pol II subunit Polr2A/Rbp1 and Spt5, and (2) degrading the exiting nascent RNA transcript via endonuclease activity. The integrator complex is also involved in the 3'-end processing of the U7 snRNA, and also the spliceosomal snRNAs U1, U2, U4 and U5. This Drosophila mojavensis (Fruit fly) protein is Protein asunder (asun).